The primary structure comprises 102 residues: MIPGQYQIQPGDIELNAGRRTHSLTVANSGDRPIQVGSHFHFFETNDALTFDRAASRGMRLNIPAGTAVRFEPGQSREVELVDLAGLREVYGFAGRVMGALD.

It belongs to the urease beta subunit family. In terms of assembly, heterotrimer of UreA (gamma), UreB (beta) and UreC (alpha) subunits. Three heterotrimers associate to form the active enzyme.

The protein resides in the cytoplasm. The catalysed reaction is urea + 2 H2O + H(+) = hydrogencarbonate + 2 NH4(+). It functions in the pathway nitrogen metabolism; urea degradation; CO(2) and NH(3) from urea (urease route): step 1/1. The sequence is that of Urease subunit beta from Pseudomonas syringae pv. tomato (strain ATCC BAA-871 / DC3000).